Here is a 2465-residue protein sequence, read N- to C-terminus: Highly reducing polyketide synthase milA (2465 aa).

Positions 1–434 (MEPIAIVGSA…GANCHVILEG (434 aa)) constitute a Ketosynthase family 3 (KS3) domain. Active-site for beta-ketoacyl synthase activity residues include Cys-172, His-311, and His-355. The segment at 450–476 (KPSLSSSPSLSPTSTSPPTPRTPANSL) is disordered. Positions 451 to 463 (PSLSSSPSLSPTS) are enriched in low complexity. Residues 567–888 (VFTGQGAQWA…CGTLSRAVDD (322 aa)) are malonyl-CoA:ACP transacylase (MAT) domain. An N-terminal hotdog fold region spans residues 957 to 1096 (HPLLGVRTNT…GKVQLFVGGD (140 aa)). The dehydratase (DH) domain stretch occupies residues 957–1265 (HPLLGVRTNT…LTVSPVAPVT (309 aa)). A PKS/mFAS DH domain is found at 957–1267 (HPLLGVRTNT…VSPVAPVTAD (311 aa)). His-989 acts as the Proton acceptor; for dehydratase activity in catalysis. The interval 1111-1267 (LNEIDVDTFY…VSPVAPVTAD (157 aa)) is C-terminal hotdog fold. Asp-1174 serves as the catalytic Proton donor; for dehydratase activity. Residues 1334 to 1367 (HSTNGLTNGHASTNGHGSTNGHISTNGHSTNGDV) are disordered. The tract at residues 2095–2269 (TYFLVGMAGS…AASVINLTGV (175 aa)) is ketoreductase (KR)domain. The Carrier domain maps to 2384 to 2459 (DMIFRAFQTV…QVVWSVVHQI (76 aa)). An O-(pantetheine 4'-phosphoryl)serine modification is found at Ser-2419.

Requires pantetheine 4'-phosphate as cofactor.

The catalysed reaction is 10 malonyl-CoA + acetyl-CoA + 3 AH2 + 8 NADPH + 18 H(+) = cordypyrone A + 3 A + 10 CO2 + 8 NADP(+) + 11 CoA + 8 H2O. The protein operates within secondary metabolite biosynthesis. Its function is as follows. Highly reducing polyketide synthase (HR-PKS); part of the gene cluster that mediates the biosynthesis of cordypyrones A and B, 2 pyrones that show modest activities against pathogenic bacteria including methicillin-resistant Staphylococcus aureus (MRSA), Mycobacterium tuberculosis and Bacillus cereus. The HR-PKS milA catalyzes the formation of cordypyrones A via condensation of one acetate with 10 malonate units. Since milA lacks an enoyl reductase domain, the 2 beta-keto processing domains DH and KR of milA collaborate with the trans-enoyl reductase milB to catalyze the different levels of reduction. The cytochrome P450 monooxygenase milC then hydroxylates the C-22 of cordypyrones A to yield cordypyrones B. The protein is Highly reducing polyketide synthase milA of Cordyceps militaris (strain CM01) (Caterpillar fungus).